Reading from the N-terminus, the 505-residue chain is Lysine--tRNA ligase (505 aa).

Mg(2+) contacts are provided by Glu409 and Glu416.

The protein belongs to the class-II aminoacyl-tRNA synthetase family. As to quaternary structure, homodimer. The cofactor is Mg(2+).

It is found in the cytoplasm. It carries out the reaction tRNA(Lys) + L-lysine + ATP = L-lysyl-tRNA(Lys) + AMP + diphosphate. The sequence is that of Lysine--tRNA ligase from Latilactobacillus sakei subsp. sakei (strain 23K) (Lactobacillus sakei subsp. sakei).